Consider the following 293-residue polypeptide: Glycerophosphodiester phosphodiesterase (293 aa).

An N-terminal signal peptide occupies residues 1-26 (MRKNRILALFVLSLGLLSFMVTPVSA). Positions 38-290 (ILTVAHRGAS…NYPDLFHKVK (253 aa)) constitute a GP-PDE domain. Histidine 43 acts as the Proton acceptor in catalysis. Positions 43, 44, and 70 each coordinate sn-glycerol 3-phosphate. Ca(2+) is bound by residues glutamate 70 and aspartate 72. Histidine 85, glutamate 152, and glutamine 188 together coordinate sn-glycerol 3-phosphate. Histidine 85 serves as the catalytic Proton donor. Glutamate 152 contributes to the Ca(2+) binding site.

It belongs to the glycerophosphoryl diester phosphodiesterase family. The cofactor is Ca(2+).

The protein localises to the secreted. It carries out the reaction a sn-glycero-3-phosphodiester + H2O = an alcohol + sn-glycerol 3-phosphate + H(+). Its function is as follows. Glycerophosphodiester phosphodiesterase hydrolyzes glycerophosphodiesters into glycerol-3-phosphate (G3P) and the corresponding alcohol. Involved in wall teichoic acid (WTA) metabolism during phosphate starvation. Catalyzes the degradation of WTA, enabling the utilization of WTA as a phosphate reserve under limiting conditions. Is highly selective for the poly(gylcerol phosphate) WTA backbone and catalyzes exolytic cleavage of individual monomer units. In vitro is active toward the WTA oligomer mimics glycerophosphoglycerol (GPG) and bis-glycerophosphoglycerol (bGPG). This is Glycerophosphodiester phosphodiesterase from Bacillus subtilis (strain 168).